Consider the following 395-residue polypeptide: Elongation factor Tu (395 aa).

The 195-residue stretch at lysine 10–glutamate 204 folds into the tr-type G domain. Residues glycine 19–threonine 26 form a G1 region. Glycine 19–threonine 26 serves as a coordination point for GTP. Threonine 26 serves as a coordination point for Mg(2+). The interval glycine 60 to asparagine 64 is G2. Positions aspartate 81–glycine 84 are G3. Residues aspartate 81–histidine 85 and asparagine 136–aspartate 139 each bind GTP. The interval asparagine 136–aspartate 139 is G4. A G5 region spans residues serine 174–leucine 176.

The protein belongs to the TRAFAC class translation factor GTPase superfamily. Classic translation factor GTPase family. EF-Tu/EF-1A subfamily. As to quaternary structure, monomer.

It is found in the cytoplasm. The catalysed reaction is GTP + H2O = GDP + phosphate + H(+). Functionally, GTP hydrolase that promotes the GTP-dependent binding of aminoacyl-tRNA to the A-site of ribosomes during protein biosynthesis. This is Elongation factor Tu from Staphylococcus carnosus (strain TM300).